Consider the following 76-residue polypeptide: Senegalin (76 aa).

An N-terminal signal peptide occupies residues 1-22 (MLSLKKSMLLLFFLGMVSFSLA). Positions 23 to 55 (NKRSDGKRADEEGEDKRADEEGEDKRADEEGED) are excised as a propeptide. The interval 24–54 (KRSDGKRADEEGEDKRADEEGEDKRADEEGE) is disordered. At L75 the chain carries Leucine amide.

As to expression, expressed by the skin glands.

It is found in the secreted. Its function is as follows. Antimicrobial peptide with activity against the Gram-positive bacterium S.aureus NCTC 10788 (MIC=50 um) and the yeast C.albicans NCPF 1467 (MIC=150 uM). Ineffective against the Gram-negative bacterium E.coli NCTC 10418. Induces a dose-dependent contraction of rat urinary bladder smooth muscle (EC50=2.9 nM) and a dose-dependent relaxation of rat tail artery smooth muscle (EC50=37.7 nM). This is Senegalin from Kassina senegalensis (Senegal running frog).